Reading from the N-terminus, the 470-residue chain is Ribulose bisphosphate carboxylase large chain (470 aa).

Positions 115 and 165 each coordinate substrate. Residue Lys167 is the Proton acceptor of the active site. Lys169 is a substrate binding site. Mg(2+) is bound by residues Lys193, Asp195, and Glu196. The residue at position 193 (Lys193) is an N6-carboxylysine. Catalysis depends on His286, which acts as the Proton acceptor. Residues Arg287, His319, and Ser371 each coordinate substrate.

This sequence belongs to the RuBisCO large chain family. Type I subfamily. Heterohexadecamer of 8 large chains and 8 small chains. Forms a CsoS2-CsoS1-RuBisCO complex. Mg(2+) serves as cofactor.

The protein localises to the carboxysome. It carries out the reaction 2 (2R)-3-phosphoglycerate + 2 H(+) = D-ribulose 1,5-bisphosphate + CO2 + H2O. The enzyme catalyses D-ribulose 1,5-bisphosphate + O2 = 2-phosphoglycolate + (2R)-3-phosphoglycerate + 2 H(+). In terms of biological role, ruBisCO catalyzes two reactions: the carboxylation of D-ribulose 1,5-bisphosphate, the primary event in carbon dioxide fixation, as well as the oxidative fragmentation of the pentose substrate in the photorespiration process. Both reactions occur simultaneously and in competition at the same active site. The polypeptide is Ribulose bisphosphate carboxylase large chain (Prochlorococcus marinus (strain MIT 9313)).